A 667-amino-acid polypeptide reads, in one-letter code: Probable potassium transport system protein Kup (667 aa).

12 helical membrane passes run 5–25 (GLLIAIGIVYGDIGTSPLYVM), 47–67 (ISLILWTVTLLTTVQTVIIAL), 88–108 (AAWLVWPALIGGAAILADGTL), 133–153 (VSNQTTVLVITIVILLVLFSI), 164–184 (AFGPIMLVWFAFLGVMGLINI), 210–230 (AGFAILGSIFLATTGAEALYS), 243–263 (SWPFVFVCLSLNYFGQGVWIL), 287–307 (LASIVLATLAAIIASQALITG), 336–356 (IYIPAVNKMLGITTIALVLFF), 367–387 (GLSITISMLTTTILLYEWLVL), 393–413 (LANLLFVIFFSTINILFMGSS), and 420–440 (GGYVSLLITLLIASVMVVWYF).

The protein belongs to the HAK/KUP transporter (TC 2.A.72) family.

The protein localises to the cell membrane. It carries out the reaction K(+)(in) + H(+)(in) = K(+)(out) + H(+)(out). In terms of biological role, transport of potassium into the cell. Likely operates as a K(+):H(+) symporter. This chain is Probable potassium transport system protein Kup, found in Lactobacillus delbrueckii subsp. bulgaricus (strain ATCC 11842 / DSM 20081 / BCRC 10696 / JCM 1002 / NBRC 13953 / NCIMB 11778 / NCTC 12712 / WDCM 00102 / Lb 14).